Consider the following 216-residue polypeptide: Potassium-transporting ATPase KdpC subunit (216 aa).

Residues 12 to 32 form a helical membrane-spanning segment; sequence LLGVSLLVFGLLYQGSLMAIG. Residues 197–207 show a composition bias toward polar residues; it reads QNETDQNSDMN. Residues 197 to 216 form a disordered region; it reads QNETDQNSDMNASEIANGDH.

Belongs to the KdpC family. In terms of assembly, the system is composed of three essential subunits: KdpA, KdpB and KdpC. The complex also contains KdpF, a small non-essential subunit.

It localises to the cell membrane. Functionally, part of the high-affinity ATP-driven potassium transport (or Kdp) system, which catalyzes the hydrolysis of ATP coupled with the electrogenic transport of potassium into the cytoplasm. This subunit acts as a catalytic chaperone that increases the ATP-binding affinity of the ATP-hydrolyzing subunit KdpB by the formation of a transient KdpB/KdpC/ATP ternary complex. The Kdp system is essential for growth under K(+) limitation, and for survival under desiccation and salt crystal inclusion. In Halobacterium salinarum (strain ATCC 29341 / DSM 671 / R1), this protein is Potassium-transporting ATPase KdpC subunit.